We begin with the raw amino-acid sequence, 351 residues long: MTDRFTRLLGIQQPIIQAPMLGVSTPALAAAVSNAGGLGSIAITGSAAEKGRALIREVRGLTDKPFNVNLFCHRPGQADPARERAWLDYLKPLFAEFGAEPPVRLKNIYLSFLEDPTLLPMLLEERPAAVSFHFGAPPRDQVRALQAVGIRVLVCATTPEEAALVEAAGADAVVAQGIEAGGHRGVFEPERGDAAIGTLALVRLLAARGSLPVVAAGGIMDGRGIRAALELGASAVQMGTAFVLCPESSANAAYREALKGPRAARTALTVTMSGRSARGLPNRMFFDAAAPGVPPLPDYPFVYDATKALQTAALARGNHDFAAQWAGQGAALARELPAAELLRTLVEELRG.

FMN contacts are provided by residues leucine 21, asparagine 69, glutamine 176, glycine 181, glycine 218, and 237–240; that span reads QMGT.

Belongs to the nitronate monooxygenase family. NMO class I subfamily. It depends on FMN as a cofactor.

The catalysed reaction is 3 propionate 3-nitronate + 3 O2 + H2O = 3 3-oxopropanoate + 2 nitrate + nitrite + H2O2 + 3 H(+). Its function is as follows. Nitronate monooxygenase that uses molecular oxygen to catalyze the oxidative denitrification of alkyl nitronates. The toxin propionate 3-nitronate (P3N) is the best substrate (and the presumed physiological substrate), but this enzyme is also active on other primary and secondary nitronates such as propyl-1-nitronate, ethylnitronate, pentyl-1-nitronate, butyl-1-nitronate and propyl-2-nitronate. Is likely involved in the degradation of P3N, that allows P.aeruginosa PAO1 to grow on 3-nitropropionate/P3N as the sole nitrogen source. Also functions in the detoxification of P3N, a metabolic poison produced by plants and fungi as a defense mechanism. Cannot oxidize nitroalkanes such as 3-nitropropionate, nitroethane, 1-nitropropane, 1-nitrobutane, 1-nitropentane, or 2-nitropropane. This is Nitronate monooxygenase from Pseudomonas aeruginosa (strain ATCC 15692 / DSM 22644 / CIP 104116 / JCM 14847 / LMG 12228 / 1C / PRS 101 / PAO1).